Consider the following 459-residue polypeptide: NADH-ubiquinone oxidoreductase chain 4 (459 aa).

Transmembrane regions (helical) follow at residues 20–42, 61–81, 103–123, 148–168, 194–214, 224–244, 257–277, 284–303, 307–329, 350–370, 392–414, and 435–455; these read PKWLWSATTTHSLIIASLSLTLF, MISTPLIILTCWLLPLMIIAS, LQALLIMAFSATEIILFYIMF, IYFLFYTLAGSLPLLVALLYL, FLWVACVTAFLVKMPLYGVHL, PVAGSMILAAILLKLGGYGMI, LAYPFIILALWGIIMTGSICM, SLIAYSSVSHMGLVASGILI, WGFTGAIILMIAHGLTSSALFCL, IILPLMATWWFIMSLANMALP, TILLTGTGTLITASYSLYLYMSS, and LLLTLHIIPIILLMIKPELIW.

It belongs to the complex I subunit 4 family.

It localises to the mitochondrion membrane. It catalyses the reaction a ubiquinone + NADH + 5 H(+)(in) = a ubiquinol + NAD(+) + 4 H(+)(out). In terms of biological role, core subunit of the mitochondrial membrane respiratory chain NADH dehydrogenase (Complex I) that is believed to belong to the minimal assembly required for catalysis. Complex I functions in the transfer of electrons from NADH to the respiratory chain. The immediate electron acceptor for the enzyme is believed to be ubiquinone. In Polypterus ornatipinnis (Ornate bichir), this protein is NADH-ubiquinone oxidoreductase chain 4 (MT-ND4).